Here is an 816-residue protein sequence, read N- to C-terminus: Auxin response factor 12 (816 aa).

Residues 1 to 10 are compositionally biased toward low complexity; sequence MSSSSAASIG. A disordered region spans residues 1 to 24; sequence MSSSSAASIGPPQPPPPPAPPEEE. The span at 11–20 shows a compositional bias: pro residues; it reads PPQPPPPPAP. A DNA-binding region (TF-B3) is located at residues 135-237; sequence FCKTLTASDT…QLLLGIRRAS (103 aa). The interval 526 to 565 is disordered; that stretch reads NDQKQKIQPDQSYQVPTSAVLPSPTSLPSHLREKFGFSDP. One can recognise a PB1 domain in the interval 717–801; sequence RTFVKVYKSG…WYIKILSPED (85 aa).

It belongs to the ARF family. In terms of assembly, homodimers and heterodimers.

It localises to the nucleus. Functionally, auxin response factors (ARFs) are transcriptional factors that bind specifically to the DNA sequence 5'-TGTCTC-3' found in the auxin-responsive promoter elements (AuxREs). This is Auxin response factor 12 (ARF12) from Oryza sativa subsp. indica (Rice).